A 506-amino-acid polypeptide reads, in one-letter code: Kynurenine 3-monooxygenase (506 aa).

This sequence belongs to the aromatic-ring hydroxylase family. KMO subfamily. FAD is required as a cofactor.

The protein resides in the mitochondrion outer membrane. It carries out the reaction L-kynurenine + NADPH + O2 + H(+) = 3-hydroxy-L-kynurenine + NADP(+) + H2O. It functions in the pathway cofactor biosynthesis; NAD(+) biosynthesis; quinolinate from L-kynurenine: step 1/3. In terms of biological role, catalyzes the hydroxylation of L-kynurenine (L-Kyn) to form 3-hydroxy-L-kynurenine (L-3OHKyn). Required for synthesis of quinolinic acid. In Emericella nidulans (strain FGSC A4 / ATCC 38163 / CBS 112.46 / NRRL 194 / M139) (Aspergillus nidulans), this protein is Kynurenine 3-monooxygenase (bna4).